We begin with the raw amino-acid sequence, 471 residues long: Probable lysophospholipase BODYGUARD 2 (471 aa).

Positions 1–45 are cleaved as a signal peptide; sequence MGIARWLNRTVGFFVFALLDIADFLLCYTYKTLDYFLESERKPCY. A lipid anchor (N-palmitoyl cysteine) is attached at Cys46. The AB hydrolase-1 domain maps to 193 to 296; it reads VVFIHGFVSS…AIKSLTLLAP (104 aa). The active site involves His197. Ser271 (nucleophile) is an active-site residue. Residues Asp418 and His446 each act as charge relay system in the active site.

The protein localises to the cell membrane. The protein resides in the secreted. It localises to the cell wall. In terms of biological role, involved in cuticle development and morphogenesis. The chain is Probable lysophospholipase BODYGUARD 2 from Arabidopsis thaliana (Mouse-ear cress).